The chain runs to 434 residues: Glutamyl-tRNA(Gln) amidotransferase subunit A (434 aa).

Residues Lys57 and Ser132 each act as charge relay system in the active site. Catalysis depends on Ser156, which acts as the Acyl-ester intermediate.

It belongs to the amidase family. GatA subfamily. As to quaternary structure, heterotrimer of A, B and C subunits.

The catalysed reaction is L-glutamyl-tRNA(Gln) + L-glutamine + ATP + H2O = L-glutaminyl-tRNA(Gln) + L-glutamate + ADP + phosphate + H(+). Functionally, allows the formation of correctly charged Gln-tRNA(Gln) through the transamidation of misacylated Glu-tRNA(Gln) in organisms which lack glutaminyl-tRNA synthetase. The reaction takes place in the presence of glutamine and ATP through an activated gamma-phospho-Glu-tRNA(Gln). In Methanocaldococcus jannaschii (strain ATCC 43067 / DSM 2661 / JAL-1 / JCM 10045 / NBRC 100440) (Methanococcus jannaschii), this protein is Glutamyl-tRNA(Gln) amidotransferase subunit A (gatA).